Consider the following 315-residue polypeptide: Initiation factor TFIIB homolog (315 aa).

It belongs to the asfivirus C315R family.

Functionally, putative initation factor. In African swine fever virus (strain Badajoz 1971 Vero-adapted) (Ba71V), this protein is Initiation factor TFIIB homolog.